Here is a 273-residue protein sequence, read N- to C-terminus: Elongation factor Ts (273 aa).

An involved in Mg(2+) ion dislocation from EF-Tu region spans residues 79–82 (TDFV).

This sequence belongs to the EF-Ts family.

Its subcellular location is the cytoplasm. Associates with the EF-Tu.GDP complex and induces the exchange of GDP to GTP. It remains bound to the aminoacyl-tRNA.EF-Tu.GTP complex up to the GTP hydrolysis stage on the ribosome. The polypeptide is Elongation factor Ts (Hydrogenobaculum sp. (strain Y04AAS1)).